The chain runs to 180 residues: Large ribosomal subunit protein uL5 (180 aa).

Belongs to the universal ribosomal protein uL5 family. As to quaternary structure, part of the 50S ribosomal subunit; part of the 5S rRNA/L5/L18/L25 subcomplex. Contacts the 5S rRNA and the P site tRNA. Forms a bridge to the 30S subunit in the 70S ribosome.

Functionally, this is one of the proteins that bind and probably mediate the attachment of the 5S RNA into the large ribosomal subunit, where it forms part of the central protuberance. In the 70S ribosome it contacts protein S13 of the 30S subunit (bridge B1b), connecting the 2 subunits; this bridge is implicated in subunit movement. Contacts the P site tRNA; the 5S rRNA and some of its associated proteins might help stabilize positioning of ribosome-bound tRNAs. This is Large ribosomal subunit protein uL5 from Latilactobacillus sakei subsp. sakei (strain 23K) (Lactobacillus sakei subsp. sakei).